The following is a 441-amino-acid chain: Mitochondrial distribution and morphology protein 12 (441 aa).

Residues 1–441 (MSIDIDWERA…VYPSFWTFLV (441 aa)) enclose the SMP-LTD domain. 2 disordered regions span residues 70–89 (YEDG…PMRE) and 180–289 (TPLR…RMRE). 2 stretches are compositionally biased toward polar residues: residues 226 to 245 (SRPS…SVST) and 253 to 263 (SSQTVLANNPG).

The protein belongs to the MDM12 family. As to quaternary structure, component of the ER-mitochondria encounter structure (ERMES) or MDM complex, composed of MMM1, MDM10, MDM12 and MDM34. An MMM1 homodimer associates with one molecule of MDM12 on each side in a pairwise head-to-tail manner, and the SMP-LTD domains of MMM1 and MDM12 generate a continuous hydrophobic tunnel for phospholipid trafficking.

It localises to the mitochondrion outer membrane. The protein resides in the endoplasmic reticulum membrane. In terms of biological role, component of the ERMES/MDM complex, which serves as a molecular tether to connect the endoplasmic reticulum (ER) and mitochondria. Components of this complex are involved in the control of mitochondrial shape and protein biogenesis, and function in nonvesicular lipid trafficking between the ER and mitochondria. MDM12 is required for the interaction of the ER-resident membrane protein MMM1 and the outer mitochondrial membrane-resident beta-barrel protein MDM10. The MDM12-MMM1 subcomplex functions in the major beta-barrel assembly pathway that is responsible for biogenesis of all mitochondrial outer membrane beta-barrel proteins, and acts in a late step after the SAM complex. The MDM10-MDM12-MMM1 subcomplex further acts in the TOM40-specific pathway after the action of the MDM12-MMM1 complex. Essential for establishing and maintaining the structure of mitochondria and maintenance of mtDNA nucleoids. The polypeptide is Mitochondrial distribution and morphology protein 12 (Paracoccidioides brasiliensis (strain Pb03)).